Consider the following 85-residue polypeptide: Large ribosomal subunit protein bL27 (85 aa).

The disordered stretch occupies residues 1–20; that stretch reads MAHKKAGGSTRNGRDSEAKR.

Belongs to the bacterial ribosomal protein bL27 family.

The protein is Large ribosomal subunit protein bL27 of Citrobacter koseri (strain ATCC BAA-895 / CDC 4225-83 / SGSC4696).